A 212-amino-acid polypeptide reads, in one-letter code: Kynurenine formamidase (212 aa).

Position 18 (W18) interacts with substrate. Zn(2+)-binding residues include H48, H52, and D54. Catalysis depends on H58, which acts as the Proton donor/acceptor. Zn(2+) contacts are provided by H160 and E172.

It belongs to the Cyclase 1 superfamily. KynB family. As to quaternary structure, homodimer. Zn(2+) serves as cofactor.

The enzyme catalyses N-formyl-L-kynurenine + H2O = L-kynurenine + formate + H(+). It participates in amino-acid degradation; L-tryptophan degradation via kynurenine pathway; L-kynurenine from L-tryptophan: step 2/2. Catalyzes the hydrolysis of N-formyl-L-kynurenine to L-kynurenine, the second step in the kynurenine pathway of tryptophan degradation. The chain is Kynurenine formamidase from Paraburkholderia xenovorans (strain LB400).